The chain runs to 265 residues: 4-hydroxy-tetrahydrodipicolinate reductase (265 aa).

Position 9–14 (9–14 (GARGKM)) interacts with NAD(+). K37 contacts NADP(+). Residues 99–101 (GTT) and 125–128 (APNF) each bind NAD(+). H155 serves as the catalytic Proton donor/acceptor. H156 is a (S)-2,3,4,5-tetrahydrodipicolinate binding site. The active-site Proton donor is K159. 165–166 (GT) contributes to the (S)-2,3,4,5-tetrahydrodipicolinate binding site.

Belongs to the DapB family.

It is found in the cytoplasm. It catalyses the reaction (S)-2,3,4,5-tetrahydrodipicolinate + NAD(+) + H2O = (2S,4S)-4-hydroxy-2,3,4,5-tetrahydrodipicolinate + NADH + H(+). The catalysed reaction is (S)-2,3,4,5-tetrahydrodipicolinate + NADP(+) + H2O = (2S,4S)-4-hydroxy-2,3,4,5-tetrahydrodipicolinate + NADPH + H(+). Its pathway is amino-acid biosynthesis; L-lysine biosynthesis via DAP pathway; (S)-tetrahydrodipicolinate from L-aspartate: step 4/4. Functionally, catalyzes the conversion of 4-hydroxy-tetrahydrodipicolinate (HTPA) to tetrahydrodipicolinate. This Lysinibacillus sphaericus (strain C3-41) protein is 4-hydroxy-tetrahydrodipicolinate reductase.